The primary structure comprises 181 residues: Large ribosomal subunit protein uL5 (181 aa).

Belongs to the universal ribosomal protein uL5 family. Part of the 50S ribosomal subunit; part of the 5S rRNA/L5/L18/L25 subcomplex. Contacts the 5S rRNA and the P site tRNA. Forms a bridge to the 30S subunit in the 70S ribosome.

In terms of biological role, this is one of the proteins that bind and probably mediate the attachment of the 5S RNA into the large ribosomal subunit, where it forms part of the central protuberance. In the 70S ribosome it contacts protein S13 of the 30S subunit (bridge B1b), connecting the 2 subunits; this bridge is implicated in subunit movement. Contacts the P site tRNA; the 5S rRNA and some of its associated proteins might help stabilize positioning of ribosome-bound tRNAs. The protein is Large ribosomal subunit protein uL5 of Campylobacter hominis (strain ATCC BAA-381 / DSM 21671 / CCUG 45161 / LMG 19568 / NCTC 13146 / CH001A).